A 1157-amino-acid chain; its full sequence is ATP-dependent helicase/deoxyribonuclease subunit B (1157 aa).

The UvrD-like helicase ATP-binding domain occupies 1–275 (MTLHAYLGRA…QYFNQLYRFN (275 aa)). Residue 8–15 (GRAGTGKS) participates in ATP binding. Positions 269-583 (NQLYRFNNQD…SIGTMDLAKV (315 aa)) constitute a UvrD-like helicase C-terminal domain. Residues Cys-784, Cys-1112, Cys-1115, and Cys-1121 each contribute to the [4Fe-4S] cluster site.

This sequence belongs to the helicase family. AddB/RexB type 1 subfamily. In terms of assembly, heterodimer of AddA and AddB. The cofactor is Mg(2+). It depends on [4Fe-4S] cluster as a cofactor.

In terms of biological role, the heterodimer acts as both an ATP-dependent DNA helicase and an ATP-dependent, dual-direction single-stranded exonuclease. Recognizes the chi site generating a DNA molecule suitable for the initiation of homologous recombination. The AddB subunit has 5' -&gt; 3' nuclease activity but not helicase activity. The protein is ATP-dependent helicase/deoxyribonuclease subunit B of Staphylococcus aureus (strain JH9).